Consider the following 521-residue polypeptide: Glucose-1-phosphate adenylyltransferase small subunit, chloroplastic/amyloplastic (521 aa).

Positions 1-32 are disordered; that stretch reads MAASIGALKSSPSSNNCINERRNDSTRAVSSR. Residues 1 to 72 constitute a chloroplast transit peptide; sequence MAASIGALKS…RSPMIVSPKA (72 aa). K268 provides a ligand contact to substrate. Residues 444-454 form an allosteric regulation region; it reads TDADRKLLAAK.

This sequence belongs to the bacterial/plant glucose-1-phosphate adenylyltransferase family. In terms of assembly, heterotetramer. Leaves and tubers.

The protein resides in the plastid. It localises to the chloroplast. The protein localises to the amyloplast. The enzyme catalyses alpha-D-glucose 1-phosphate + ATP + H(+) = ADP-alpha-D-glucose + diphosphate. It functions in the pathway glycan biosynthesis; starch biosynthesis. With respect to regulation, activated by 3'phosphoglycerate, inhibited by orthophosphate. Allosteric regulation. This protein plays a role in synthesis of starch. It catalyzes the synthesis of the activated glycosyl donor, ADP-glucose from Glc-1-P and ATP. The sequence is that of Glucose-1-phosphate adenylyltransferase small subunit, chloroplastic/amyloplastic from Solanum tuberosum (Potato).